A 150-amino-acid chain; its full sequence is MTNELNSLDIKEIMDLLPHRYPFLLVDRVLDYVPGKRLHGIKNISFNEPQFTGHFPDTPIYPGVMILESLAQATGVLAFATYGKPAVNELYFLASMDKVRFRRPVIPGDVLDLEVIYLKDRRGMGKFECVAKVDGQVACEAMIMCARREI.

The active site involves histidine 54.

It belongs to the thioester dehydratase family. FabZ subfamily.

Its subcellular location is the cytoplasm. The enzyme catalyses a (3R)-hydroxyacyl-[ACP] = a (2E)-enoyl-[ACP] + H2O. Involved in unsaturated fatty acids biosynthesis. Catalyzes the dehydration of short chain beta-hydroxyacyl-ACPs and long chain saturated and unsaturated beta-hydroxyacyl-ACPs. This is 3-hydroxyacyl-[acyl-carrier-protein] dehydratase FabZ from Psychromonas ingrahamii (strain DSM 17664 / CCUG 51855 / 37).